A 185-amino-acid polypeptide reads, in one-letter code: TRAF-interacting protein with FHA domain-containing protein A (185 aa).

Threonine 9 bears the Phosphothreonine mark. The region spanning 48 to 104 is the FHA domain; sequence VKFGRNSNMCQYTFQDKQVSRVQFALQPFKQFNSSVLSFEIKNMSKKTSLMVDNQEL.

The protein belongs to the TIFA family. As to quaternary structure, homooligomer; homooligomerizes following phosphorylation at Thr-9. Interacts with IRAK1, TRAF2 and TRAF6. Interacts with TIFAB; binding to TIFAB inhibits TRAF6 activation, possibly by inducing a conformational change in TIFA. Interacts with ZCCHC11; binding to ZCCHC11 suppresses the TRAF6-dependent activation of NF-kappa-B. Post-translationally, phosphorylated at Thr-9 following detection of ADP-D-glycero-beta-D-manno-heptose (ADP-Heptose) by ALPK1. Phosphorylation at Thr-9 by ALPK1 leads to the formation of an intermolecular binding between the FHA domain and phosphorylated Thr-9, promoting TIFA oligomerization and TIFA-mediated NF-kappa-B activation.

It localises to the cytoplasm. Adapter molecule that plays a key role in the activation of pro-inflammatory NF-kappa-B signaling following detection of bacterial pathogen-associated molecular pattern metabolites (PAMPs). Promotes activation of an innate immune response by inducing the oligomerization and polyubiquitination of TRAF6, which leads to the activation of TAK1 and IKK through a proteasome-independent mechanism. TIFA-dependent innate immune response is triggered by ADP-D-glycero-beta-D-manno-heptose (ADP-Heptose), a potent PAMP present in all Gram-negative and some Gram-positive bacteria: ADP-Heptose is recognized by ALPK1, which phosphorylates TIFA at Thr-9, leading to TIFA homooligomerization and subsequent activation of pro-inflammatory NF-kappa-B signaling. The sequence is that of TRAF-interacting protein with FHA domain-containing protein A from Rattus norvegicus (Rat).